The sequence spans 200 residues: Proteasome subunit beta 2 (200 aa).

Residues 1-10 (MSDQLELMTG) constitute a propeptide, removed in mature form; by autocatalysis. Residue Thr11 is the Nucleophile of the active site.

It belongs to the peptidase T1B family. The 20S proteasome core is composed of 14 alpha and 14 beta subunits that assemble into four stacked heptameric rings, resulting in a barrel-shaped structure. The two inner rings, each composed of seven catalytic beta subunits, are sandwiched by two outer rings, each composed of seven alpha subunits. The catalytic chamber with the active sites is on the inside of the barrel. Has a gated structure, the ends of the cylinder being occluded by the N-termini of the alpha-subunits. Is capped at one or both ends by the proteasome regulatory ATPase, PAN.

Its subcellular location is the cytoplasm. The enzyme catalyses Cleavage of peptide bonds with very broad specificity.. Its activity is regulated as follows. The formation of the proteasomal ATPase PAN-20S proteasome complex, via the docking of the C-termini of PAN into the intersubunit pockets in the alpha-rings, triggers opening of the gate for substrate entry. Interconversion between the open-gate and close-gate conformations leads to a dynamic regulation of the 20S proteasome proteolysis activity. Functionally, component of the proteasome core, a large protease complex with broad specificity involved in protein degradation. This is Proteasome subunit beta 2 from Caldivirga maquilingensis (strain ATCC 700844 / DSM 13496 / JCM 10307 / IC-167).